The chain runs to 444 residues: Ribulose bisphosphate carboxylase large chain (444 aa).

An N6,N6,N6-trimethyllysine modification is found at lysine 5. Substrate is bound by residues asparagine 114 and threonine 164. Lysine 166 serves as the catalytic Proton acceptor. Lysine 168 serves as a coordination point for substrate. Residues lysine 192, aspartate 194, and glutamate 195 each coordinate Mg(2+). Lysine 192 is modified (N6-carboxylysine). The Proton acceptor role is filled by histidine 285. Arginine 286, histidine 318, and serine 370 together coordinate substrate.

Belongs to the RuBisCO large chain family. Type I subfamily. Heterohexadecamer of 8 large chains and 8 small chains; disulfide-linked. The disulfide link is formed within the large subunit homodimers. Mg(2+) is required as a cofactor. Post-translationally, the disulfide bond which can form in the large chain dimeric partners within the hexadecamer appears to be associated with oxidative stress and protein turnover.

It localises to the plastid. It is found in the chloroplast. It catalyses the reaction 2 (2R)-3-phosphoglycerate + 2 H(+) = D-ribulose 1,5-bisphosphate + CO2 + H2O. It carries out the reaction D-ribulose 1,5-bisphosphate + O2 = 2-phosphoglycolate + (2R)-3-phosphoglycerate + 2 H(+). Its function is as follows. RuBisCO catalyzes two reactions: the carboxylation of D-ribulose 1,5-bisphosphate, the primary event in carbon dioxide fixation, as well as the oxidative fragmentation of the pentose substrate in the photorespiration process. Both reactions occur simultaneously and in competition at the same active site. The protein is Ribulose bisphosphate carboxylase large chain of Botrychium strictum (Fern).